Reading from the N-terminus, the 224-residue chain is Urease accessory protein UreF (224 aa).

The protein belongs to the UreF family. As to quaternary structure, ureD, UreF and UreG form a complex that acts as a GTP-hydrolysis-dependent molecular chaperone, activating the urease apoprotein by helping to assemble the nickel containing metallocenter of UreC. The UreE protein probably delivers the nickel.

It is found in the cytoplasm. Functionally, required for maturation of urease via the functional incorporation of the urease nickel metallocenter. This chain is Urease accessory protein UreF, found in Pseudomonas fluorescens (strain Pf0-1).